Here is a 169-residue protein sequence, read N- to C-terminus: Large ribosomal subunit protein bL19m (169 aa).

The transit peptide at 1–16 directs the protein to the mitochondrion; it reads MWSRNVRLLGSWTRSY.

It belongs to the bacterial ribosomal protein bL19 family. Component of the mitochondrial large ribosomal subunit (mt-LSU). Mature yeast 74S mitochondrial ribosomes consist of a small (37S) and a large (54S) subunit. The 37S small subunit contains a 15S ribosomal RNA (15S mt-rRNA) and 34 different proteins. The 54S large subunit contains a 21S rRNA (21S mt-rRNA) and 46 different proteins.

Its subcellular location is the mitochondrion. Component of the mitochondrial ribosome (mitoribosome), a dedicated translation machinery responsible for the synthesis of mitochondrial genome-encoded proteins, including at least some of the essential transmembrane subunits of the mitochondrial respiratory chain. The mitoribosomes are attached to the mitochondrial inner membrane and translation products are cotranslationally integrated into the membrane. bL19m is essential for respiration. The polypeptide is Large ribosomal subunit protein bL19m (IMG1) (Saccharomyces cerevisiae (strain ATCC 204508 / S288c) (Baker's yeast)).